A 144-amino-acid polypeptide reads, in one-letter code: Transcription antitermination protein NusB (144 aa).

It belongs to the NusB family.

Functionally, involved in transcription antitermination. Required for transcription of ribosomal RNA (rRNA) genes. Binds specifically to the boxA antiterminator sequence of the ribosomal RNA (rrn) operons. The polypeptide is Transcription antitermination protein NusB (Haemophilus influenzae (strain PittGG)).